The sequence spans 671 residues: MPAMGTALPRAMASTASVSTSTGSSELSSLSDNINNPADISVIVIYFVVVMAVGVWAMVKTNRSTVGGFFLAGRSMTWWPMGASLFASNIGSGHFVGLAGTGAATGIAVTAFESHSFALLLVLGWFFVPIYIKAGVMTMPEYLRKRFGGKRLQIYLSVLSLFICVILTISADIFSGAIFIKLALGLDLYLAIFILLAITAVFTITGGLASVIYTDTLQAIIMLVGSFILMIYAFVEVGGYESFTEKYMNAIPSVVEGDNLTISPKCYTPQPDSFHIFRDAVTGDIPWPGTAFGMPITALWYWCINQVIVQRCLCGKNMSHVKAACIVCGYLKLLPIFFMVMPGMISRILYTDMVACVVPSECVKQCGVDVGCTNYAYPMLVLKLMPMGLRGLMLSVMLASLMSSLTSIFNSASTLFTMDLYTKIRKKASERELLIAGRLFVSVLIVTSILWVPIVEVSQGGQLIHYTEAISSYLGPPIAAVFLVAIFCKRVNEQGAFWGLMVGLVLGLIRMIAEFSYGTGSCLAPSSCPKVICGVHYLYYAIILFFVSILVILGVSYLTKPIPDVHLYRLCWSLRNSEEERIDLDAEDREENEADARTEEDQTEKPRGCLKKTYDLCCGLQRAEPKLTKEEEEALKKKLTDTSEKPFWRTVVNVNVIVLLAVAAFFYGYFA.

The Cytoplasmic portion of the chain corresponds to 1–38 (MPAMGTALPRAMASTASVSTSTGSSELSSLSDNINNPA). A helical transmembrane segment spans residues 39–59 (DISVIVIYFVVVMAVGVWAMV). Over 60-65 (KTNRST) the chain is Extracellular. The chain crosses the membrane as a helical span at residues 66–86 (VGGFFLAGRSMTWWPMGASLF). Residues 87 to 89 (ASN) lie on the Cytoplasmic side of the membrane. The helical transmembrane segment at 90-110 (IGSGHFVGLAGTGAATGIAVT) threads the bilayer. Residues 111 to 116 (AFESHS) lie on the Extracellular side of the membrane. The helical transmembrane segment at 117 to 137 (FALLLVLGWFFVPIYIKAGVM) threads the bilayer. The Cytoplasmic segment spans residues 138–159 (TMPEYLRKRFGGKRLQIYLSVL). Residues 160 to 180 (SLFICVILTISADIFSGAIFI) form a helical membrane-spanning segment. Residue K181 is a topological domain, extracellular. A helical transmembrane segment spans residues 182 to 202 (LALGLDLYLAIFILLAITAVF). The Cytoplasmic portion of the chain corresponds to 203-218 (TITGGLASVIYTDTLQ). The chain crosses the membrane as a helical span at residues 219–239 (AIIMLVGSFILMIYAFVEVGG). The Extracellular segment spans residues 240–288 (YESFTEKYMNAIPSVVEGDNLTISPKCYTPQPDSFHIFRDAVTGDIPWP). A helical membrane pass occupies residues 289–309 (GTAFGMPITALWYWCINQVIV). At 310-324 (QRCLCGKNMSHVKAA) the chain is on the cytoplasmic side. Residues 325–345 (CIVCGYLKLLPIFFMVMPGMI) form a helical membrane-spanning segment. At 346–378 (SRILYTDMVACVVPSECVKQCGVDVGCTNYAYP) the chain is on the extracellular side. A helical transmembrane segment spans residues 379–399 (MLVLKLMPMGLRGLMLSVMLA). Residues 400-434 (SLMSSLTSIFNSASTLFTMDLYTKIRKKASERELL) lie on the Cytoplasmic side of the membrane. Residues 435 to 455 (IAGRLFVSVLIVTSILWVPIV) form a helical membrane-spanning segment. Topologically, residues 456–467 (EVSQGGQLIHYT) are extracellular. The chain crosses the membrane as a helical span at residues 468 to 488 (EAISSYLGPPIAAVFLVAIFC). At 489–494 (KRVNEQ) the chain is on the cytoplasmic side. Residues 495–515 (GAFWGLMVGLVLGLIRMIAEF) form a helical membrane-spanning segment. The Extracellular portion of the chain corresponds to 516-537 (SYGTGSCLAPSSCPKVICGVHY). The helical transmembrane segment at 538-558 (LYYAIILFFVSILVILGVSYL) threads the bilayer. Residues 559–650 (TKPIPDVHLY…DTSEKPFWRT (92 aa)) are Cytoplasmic-facing. Residues 583-593 (DLDAEDREENE) show a composition bias toward acidic residues. The disordered stretch occupies residues 583–604 (DLDAEDREENEADARTEEDQTE). Residues 594–604 (ADARTEEDQTE) show a composition bias toward basic and acidic residues. A helical transmembrane segment spans residues 651–671 (VVNVNVIVLLAVAAFFYGYFA).

It belongs to the sodium:solute symporter (SSF) (TC 2.A.21) family.

The protein resides in the cell membrane. In terms of biological role, generates D-glucose-induced depolarization in a pH-dependent and Na(+)-independent manner, with activity in acidic conditions (pH 5) but not neutral conditions. This is Solute carrier family 5 member 4 from Rattus norvegicus (Rat).